The following is a 330-amino-acid chain: Daunorubicin/doxorubicin resistance ATP-binding protein DrrA (330 aa).

Residues 9–239 (IETSGLVKVY…LGSNVLRLRL (231 aa)) enclose the ABC transporter domain. 41–48 (GPNGAGKS) is an ATP binding site.

Belongs to the ABC transporter superfamily. Drug exporter-1 (DrugE1) (TC 3.A.1.105) family. As to quaternary structure, the complex is composed of two ATP-binding proteins (DrrA) and two transmembrane proteins (DrrB).

Its subcellular location is the cell membrane. It carries out the reaction daunorubicin(in) + ATP + H2O = daunorubicin(out) + ADP + phosphate + H(+). Part of the ABC transporter complex DrrAB involved in daunorubicin and doxorubicin resistance. Responsible for energy coupling to the transport system. Binds ATP or GTP. The sequence is that of Daunorubicin/doxorubicin resistance ATP-binding protein DrrA (drrA) from Streptomyces peucetius.